We begin with the raw amino-acid sequence, 202 residues long: Cold-regulated 413 plasma membrane protein 4 (202 aa).

Over 1–42 (MGRGEFLAMKTEENAANLINSDMNEFVAAAKKLVKDVGMLGG) the chain is Extracellular. The chain crosses the membrane as a helical span at residues 43–63 (VGFGTSVLQWAASIFAIYLLI). Topologically, residues 64 to 72 (LDRTNWKTK) are cytoplasmic. Residues 73–93 (MLTTLLVPYIFFTLPSVIFQF) traverse the membrane as a helical segment. At 94 to 97 (FSGD) the chain is on the extracellular side. The helical transmembrane segment at 98 to 118 (FGKWIALIAIIVRLFFPKEFP) threads the bilayer. Position 119 (Glu-119) is a topological domain, cytoplasmic. A helical membrane pass occupies residues 120–140 (WLEIPVALILIVVVSPSLIAW). The Extracellular portion of the chain corresponds to 141–145 (TLRES). A helical membrane pass occupies residues 146–166 (WVGAVICLVIACYLFHEHIKA). Residues 167 to 181 (SGGFKNSFTQKNGIS) are Cytoplasmic-facing. A helical transmembrane segment spans residues 182–202 (NTIGIVALLVYPVWTIFFHIF).

It belongs to the Cold-regulated 413 protein family.

The protein resides in the cell membrane. This chain is Cold-regulated 413 plasma membrane protein 4, found in Arabidopsis thaliana (Mouse-ear cress).